The following is a 217-amino-acid chain: Cytidylate kinase (217 aa).

10-18 (GPAGAGKST) provides a ligand contact to ATP.

It belongs to the cytidylate kinase family. Type 1 subfamily.

It is found in the cytoplasm. The catalysed reaction is CMP + ATP = CDP + ADP. It catalyses the reaction dCMP + ATP = dCDP + ADP. This is Cytidylate kinase from Clostridium botulinum (strain Loch Maree / Type A3).